Consider the following 290-residue polypeptide: Signal peptidase I (290 aa).

Residues 1-13 are Cytoplasmic-facing; sequence MKFLRSVYAFCSS. A helical transmembrane segment spans residues 14-34; that stretch reads WVGTIVIVLLVIFFIAQAFII. Residues 35–290 are Extracellular-facing; that stretch reads PSRSMVGTLY…KIIKKENATH (256 aa). Residues Ser-38 and Lys-106 contribute to the active site.

The protein belongs to the peptidase S26 family.

The protein resides in the cell membrane. The catalysed reaction is Cleavage of hydrophobic, N-terminal signal or leader sequences from secreted and periplasmic proteins.. The chain is Signal peptidase I (lepB) from Helicobacter pylori (strain ATCC 700392 / 26695) (Campylobacter pylori).